Reading from the N-terminus, the 465-residue chain is Azaphilone cluster-specific transcription factor azaR (465 aa).

Positions 1–16 are enriched in low complexity; the sequence is MSDSRTTTTKNNTTNH. The segment at 1–25 is disordered; it reads MSDSRTTTTKNNTTNHKTSRQGPGS. The zn(2)-C6 fungal-type DNA-binding region spans 27 to 53; it reads CEECRRRKLRCDRQPQCQNCVDAGVYC.

Its subcellular location is the nucleus. Transcription factor that regulates the expression of the gene cluster that mediates the biosynthesis of azaphilones, a class of fungal metabolites characterized by a highly oxygenated pyrano-quinone bicyclic core and exhibiting a broad range of bioactivities. In Aspergillus niger (strain ATCC 1015 / CBS 113.46 / FGSC A1144 / LSHB Ac4 / NCTC 3858a / NRRL 328 / USDA 3528.7), this protein is Azaphilone cluster-specific transcription factor azaR.